Here is a 247-residue protein sequence, read N- to C-terminus: Fumarate reductase iron-sulfur subunit (247 aa).

Y12 serves as a coordination point for a menaquinone. In terms of domain architecture, 2Fe-2S ferredoxin-type spans 14–94; sequence PEIESAPTFQ…PGPVRVEPMR (81 aa). [2Fe-2S] cluster is bound by residues C56, C61, and C76. Residues 140–169 form the 4Fe-4S ferredoxin-type domain; the sequence is LDAFKQFSMCINCMLCYSACPVYALDPDFL. 3 residues coordinate [4Fe-4S] cluster: C149, C152, and C155. C159, C205, and C211 together coordinate [3Fe-4S] cluster. Position 215 (C215) interacts with [4Fe-4S] cluster. Position 226 to 229 (226 to 229) interacts with a menaquinone; that stretch reads QRYK.

This sequence belongs to the succinate dehydrogenase/fumarate reductase iron-sulfur protein family. Fumarate dehydrogenase forms part of an enzyme complex containing four subunits: a flavoprotein, an iron-sulfur, and two hydrophobic anchor proteins. [2Fe-2S] cluster serves as cofactor. [3Fe-4S] cluster is required as a cofactor. It depends on [4Fe-4S] cluster as a cofactor.

The protein localises to the cell membrane. It catalyses the reaction a quinone + succinate = fumarate + a quinol. The catalysed reaction is a menaquinone + succinate = a menaquinol + fumarate. This chain is Fumarate reductase iron-sulfur subunit (frdB), found in Mycobacterium tuberculosis (strain CDC 1551 / Oshkosh).